The chain runs to 297 residues: uncharacterized protein (297 aa).

Transmembrane regions (helical) follow at residues 14–34 (LFLM…FLKF), 55–75 (LLLG…IYFF), 81–101 (FYFG…AGAL), 110–130 (AIIL…RVAF), 135–155 (LSTL…KLLF), 163–183 (IVGA…YGSI), and 208–228 (LIMT…SKCF).

The protein localises to the cell membrane. This is an uncharacterized protein from Methanocaldococcus jannaschii (strain ATCC 43067 / DSM 2661 / JAL-1 / JCM 10045 / NBRC 100440) (Methanococcus jannaschii).